The primary structure comprises 574 residues: MDKYDKIIDLTKRRGFLWNSFEIYGGIAGFFDYGPLGAILKNNVINTWRKHYIVNEGFYEIDSPTVTPYEVLKASGHVENFTDPLVECKDCLESFRADHIIEENVDVDTEGKTLQELQEMIEKNNIRCPKCGGEFKEVSTFNLMFATSIGPGGKRAAFMRPETAQGIFIQFKRISQFFRNKLPFGAVQIGKAYRNEISPRQGVIRLREFTQAEGEFFIDSRKKENFEKFESVKDMVLPLLSGKNQEDESLSSEEKVVKMSLSDAVKNGIIAHEAIAYYIAVTKKFLMEIGIDETKLRFRQHLPNEMAHYAADCWDAELYTDRYGWIECVGVADRTNYDLLAHMKNSGDDLSVFVELDEEHEIEAYEIELNYKLVGRTFKGDAKVLEESLKELDDKKMEELVEALETEGKYVLKTCKRDFEILKEYLTAKKVKKIVKGEKIIPHVIEPSYGIDRITYCVMEHAFKEDEDRTVMGFSNAVSPIKVGVFPLVNKEGMPEIAMDLKNKLRENGLIAEYDDSGAIGRRYMRMDEVGTPFCITIDGETLKDRSVTIRERDSREQFRIPINEVVPYIKDKL.

Substrate-binding residues include arginine 96 and glutamate 162. ATP contacts are provided by residues 194-196 (RNE), 204-209 (IRLREF), 327-328 (EC), and 450-453 (GIDR). Residue 209 to 213 (FTQAE) coordinates substrate. Residue 446–450 (EPSYG) coordinates substrate.

Belongs to the class-II aminoacyl-tRNA synthetase family.

Its subcellular location is the cytoplasm. The enzyme catalyses tRNA(Gly) + glycine + ATP = glycyl-tRNA(Gly) + AMP + diphosphate. Functionally, catalyzes the attachment of glycine to tRNA(Gly). This Methanococcus maripaludis (strain DSM 14266 / JCM 13030 / NBRC 101832 / S2 / LL) protein is Glycine--tRNA ligase.